The chain runs to 287 residues: Thymidylate synthase (287 aa).

DUMP is bound at residue Arg-21. His-51 is a (6R)-5,10-methylene-5,6,7,8-tetrahydrofolate binding site. Position 150-151 (150-151) interacts with dUMP; it reads RR. Residue Cys-170 is the Nucleophile of the active site. DUMP contacts are provided by residues 190–193, Asn-201, and 231–233; these read RSGD and HIY. Residue Asp-193 coordinates (6R)-5,10-methylene-5,6,7,8-tetrahydrofolate. Ala-286 lines the (6R)-5,10-methylene-5,6,7,8-tetrahydrofolate pocket.

It belongs to the thymidylate synthase family. Bacterial-type ThyA subfamily. As to quaternary structure, homodimer.

The protein resides in the cytoplasm. The enzyme catalyses dUMP + (6R)-5,10-methylene-5,6,7,8-tetrahydrofolate = 7,8-dihydrofolate + dTMP. It participates in pyrimidine metabolism; dTTP biosynthesis. In terms of biological role, catalyzes the reductive methylation of 2'-deoxyuridine-5'-monophosphate (dUMP) to 2'-deoxythymidine-5'-monophosphate (dTMP) while utilizing 5,10-methylenetetrahydrofolate (mTHF) as the methyl donor and reductant in the reaction, yielding dihydrofolate (DHF) as a by-product. This enzymatic reaction provides an intracellular de novo source of dTMP, an essential precursor for DNA biosynthesis. The sequence is that of Thymidylate synthase from Mycoplasma pneumoniae (strain ATCC 29342 / M129 / Subtype 1) (Mycoplasmoides pneumoniae).